An 86-amino-acid chain; its full sequence is Small ribosomal subunit protein bS18 (86 aa).

It belongs to the bacterial ribosomal protein bS18 family. As to quaternary structure, part of the 30S ribosomal subunit. Forms a tight heterodimer with protein bS6.

In terms of biological role, binds as a heterodimer with protein bS6 to the central domain of the 16S rRNA, where it helps stabilize the platform of the 30S subunit. The polypeptide is Small ribosomal subunit protein bS18 (Campylobacter curvus (strain 525.92)).